The primary structure comprises 460 residues: Baeyer-Villiger oxidase AgnL3 (460 aa).

Belongs to the questin oxidase family. The cofactor is NADPH.

The protein operates within secondary metabolite biosynthesis. Functionally, baeyer-Villiger oxidase; part of the gene cluster that mediates the biosynthesis of agnestins, dihydroxy-xanthone metabolites. The pathway begins with the assembly and cyclization of atrochrysone thioester by the non-reducing polyketide synthase Agnpks1. The atrochrysone carboxyl ACP thioesterase AgnL7 then breaks the thioester bond and releases the atrochrysone carboxylic acid as the first enzyme-free intermediate. The decarboxylase AgnL1 then catalyzes the concerted decarboxylation-elimination required to convert atochrysone carboxylic acid into emodin anthrone, which is further oxidized to emodin by the anthrone oxygenase AgnL2. Emodin then undergoes reduction catalyzed by the oxidoreductase AgnL4 to yield the dihydroquinone tautomer which is the substrate for reduction by the short chain dehydrogenase AgnL6 reduction to produce hydroxyketone, followed by AgnL8 dehydration and likely spontaneous autoxidation to chrysophanol. Baeyer-Villiger oxidation by the oxidase AgnL3 leads to monodictyphenone via cleavage of the C-10/C-10a bond of chrysophanol. Alternative cleavage at the C-4a/C-10 bond of chrysophanol also leads to the formation some cephalone F. Further conversion to agnestins A and B, requires reduction to dihydro-monodictyphenone, oxidation to agnestin C probably via an epoxide, and rearrangement to either agnestin A or agnestin B directly, although agnestin A or agnestin B can also interconvert. Within the cluster, AgnR1 is the only unassigned oxidoreductase present which could be involved in this conversion. However, AgnR1 seems not to be involved in this step, and thus genes involved in the proposed oxidation/reduction may be located elsewhere on the genome. Further agnestin A derivatives are probably formed by spontaneous decarboxylations, dehydrations and methanolysis reactions. In Paecilomyces divaricatus (Penicillium divaricatum), this protein is Baeyer-Villiger oxidase AgnL3.